The primary structure comprises 267 residues: Formamidopyrimidine-DNA glycosylase (267 aa).

P2 functions as the Schiff-base intermediate with DNA in the catalytic mechanism. Residue E3 is the Proton donor of the active site. The active-site Proton donor; for beta-elimination activity is K58. Residues H91, R110, and R152 each contribute to the DNA site. The FPG-type zinc finger occupies 233–267; that stretch reads DVYGRGTDACTRCGGALEEIRLGNRSTVFCPRCQT. R257 acts as the Proton donor; for delta-elimination activity in catalysis.

The protein belongs to the FPG family. Monomer. The cofactor is Zn(2+).

The catalysed reaction is Hydrolysis of DNA containing ring-opened 7-methylguanine residues, releasing 2,6-diamino-4-hydroxy-5-(N-methyl)formamidopyrimidine.. The enzyme catalyses 2'-deoxyribonucleotide-(2'-deoxyribose 5'-phosphate)-2'-deoxyribonucleotide-DNA = a 3'-end 2'-deoxyribonucleotide-(2,3-dehydro-2,3-deoxyribose 5'-phosphate)-DNA + a 5'-end 5'-phospho-2'-deoxyribonucleoside-DNA + H(+). Its function is as follows. Involved in base excision repair of DNA damaged by oxidation or by mutagenic agents. Acts as a DNA glycosylase that recognizes and removes damaged bases. Has a preference for oxidized purines, such as 7,8-dihydro-8-oxoguanine (8-oxoG). Has AP (apurinic/apyrimidinic) lyase activity and introduces nicks in the DNA strand. Cleaves the DNA backbone by beta-delta elimination to generate a single-strand break at the site of the removed base with both 3'- and 5'-phosphates. In Geobacter metallireducens (strain ATCC 53774 / DSM 7210 / GS-15), this protein is Formamidopyrimidine-DNA glycosylase.